The following is a 157-amino-acid chain: Ubiquitin-like protein 4A (157 aa).

Positions 1-76 (MQLTVKALQG…LNLVVKPLEK (76 aa)) constitute a Ubiquitin-like domain. Residue Lys-48 forms a Glycyl lysine isopeptide (Lys-Gly) (interchain with G-Cter in ubiquitin) linkage. The residue at position 90 (Ser-90) is a Phosphoserine. The tract at residues 96-138 (WQLISKVLARHFSAADASRVLEQPQRDYERSLSRLTLDDIERL) is required and sufficient for interaction with BAG6.

Component of the BAG6/BAT3 complex, at least composed of BAG6, UBL4A and GET4/TRC35. Interacts with BAG6; the interaction is direct and required for UBL4A protein stability. Interacts with USP13; may be indirect via BAG6. Post-translationally, polyubiquitinated. Ubiquitination by AMFR and deubiquitination by USP13 may regulate the interaction between the BAG6/BAT complex and SGTA and therefore may regulate client proteins fate.

Its subcellular location is the cytoplasm. It is found in the cytosol. It localises to the nucleus. In terms of biological role, as part of a cytosolic protein quality control complex, the BAG6/BAT3 complex, maintains misfolded and hydrophobic patches-containing proteins in a soluble state and participates in their proper delivery to the endoplasmic reticulum or alternatively can promote their sorting to the proteasome where they undergo degradation. The BAG6/BAT3 complex is involved in the post-translational delivery of tail-anchored/type II transmembrane proteins to the endoplasmic reticulum membrane. Recruited to ribosomes, it interacts with the transmembrane region of newly synthesized tail-anchored proteins and together with SGTA and ASNA1 mediates their delivery to the endoplasmic reticulum. Client proteins that cannot be properly delivered to the endoplasmic reticulum are ubiquitinated and sorted to the proteasome. Similarly, the BAG6/BAT3 complex also functions as a sorting platform for proteins of the secretory pathway that are mislocalized to the cytosol either delivering them to the proteasome for degradation or to the endoplasmic reticulum. The BAG6/BAT3 complex also plays a role in the endoplasmic reticulum-associated degradation (ERAD), a quality control mechanism that eliminates unwanted proteins of the endoplasmic reticulum through their retrotranslocation to the cytosol and their targeting to the proteasome. It maintains these retrotranslocated proteins in an unfolded yet soluble state condition in the cytosol to ensure their proper delivery to the proteasome. This Pongo abelii (Sumatran orangutan) protein is Ubiquitin-like protein 4A (UBL4A).